A 637-amino-acid chain; its full sequence is Serine/threonine-protein kinase Nek11 (637 aa).

The region spanning 29–287 (YVLQQKLGSG…AIEILKIPYI (259 aa)) is the Protein kinase domain. Residues 35-43 (LGSGSFGTV) and Lys-61 contribute to the ATP site. Asp-158 acts as the Proton acceptor in catalysis. At Ser-273 the chain carries Phosphoserine; by CHEK1. The stretch at 302–385 (TLEDKNLDCQ…QELRSRNFQQ (84 aa)) forms a coiled coil. The tract at residues 399–446 (GMEEKEEQPEGRPSCSPQDEDEERWQDREEEFDEPTLENLSEPQPIPS) is disordered. Positions 416 to 434 (QDEDEERWQDREEEFDEPT) are enriched in acidic residues.

This sequence belongs to the protein kinase superfamily. NEK Ser/Thr protein kinase family. NIMA subfamily. In terms of assembly, interacts with NEK2. Mn(2+) serves as cofactor. Mg(2+) is required as a cofactor. In terms of processing, phosphorylated by NEK2. Phosphorylation at Ser-273 is important for its activation.

Its subcellular location is the nucleus. It is found in the nucleolus. The enzyme catalyses L-seryl-[protein] + ATP = O-phospho-L-seryl-[protein] + ADP + H(+). It catalyses the reaction L-threonyl-[protein] + ATP = O-phospho-L-threonyl-[protein] + ADP + H(+). Autorepressed by intramolecular binding of the C-terminus which dissociates following phosphorylation by NEK2. Activated in response to DNA damage. Inhibited by zinc. In terms of biological role, protein kinase which plays an important role in the G2/M checkpoint response to DNA damage. Controls degradation of CDC25A by directly phosphorylating it on residues whose phosphorylation is required for BTRC-mediated polyubiquitination and degradation. This chain is Serine/threonine-protein kinase Nek11 (NEK11), found in Macaca fascicularis (Crab-eating macaque).